The chain runs to 200 residues: ATP-dependent Clp protease proteolytic subunit 1 (200 aa).

The active-site Nucleophile is Ser102. His127 is a catalytic residue.

It belongs to the peptidase S14 family. As to quaternary structure, fourteen ClpP subunits assemble into 2 heptameric rings which stack back to back to give a disk-like structure with a central cavity, resembling the structure of eukaryotic proteasomes.

The protein resides in the cytoplasm. It catalyses the reaction Hydrolysis of proteins to small peptides in the presence of ATP and magnesium. alpha-casein is the usual test substrate. In the absence of ATP, only oligopeptides shorter than five residues are hydrolyzed (such as succinyl-Leu-Tyr-|-NHMec, and Leu-Tyr-Leu-|-Tyr-Trp, in which cleavage of the -Tyr-|-Leu- and -Tyr-|-Trp bonds also occurs).. In terms of biological role, cleaves peptides in various proteins in a process that requires ATP hydrolysis. Has a chymotrypsin-like activity. Plays a major role in the degradation of misfolded proteins. In Bradyrhizobium diazoefficiens (strain JCM 10833 / BCRC 13528 / IAM 13628 / NBRC 14792 / USDA 110), this protein is ATP-dependent Clp protease proteolytic subunit 1.